A 430-amino-acid chain; its full sequence is Enolase (430 aa).

Gln165 lines the (2R)-2-phosphoglycerate pocket. The Proton donor role is filled by Glu207. The Mg(2+) site is built by Asp244, Glu287, and Asp314. 4 residues coordinate (2R)-2-phosphoglycerate: Lys339, Arg368, Ser369, and Lys390. Lys339 serves as the catalytic Proton acceptor.

It belongs to the enolase family. As to quaternary structure, component of the RNA degradosome, a multiprotein complex involved in RNA processing and mRNA degradation. It depends on Mg(2+) as a cofactor.

The protein localises to the cytoplasm. The protein resides in the secreted. It is found in the cell surface. It carries out the reaction (2R)-2-phosphoglycerate = phosphoenolpyruvate + H2O. Its pathway is carbohydrate degradation; glycolysis; pyruvate from D-glyceraldehyde 3-phosphate: step 4/5. Catalyzes the reversible conversion of 2-phosphoglycerate (2-PG) into phosphoenolpyruvate (PEP). It is essential for the degradation of carbohydrates via glycolysis. The polypeptide is Enolase (Xanthomonas campestris pv. campestris (strain 8004)).